The primary structure comprises 438 residues: Transposon Ty2-F Gag polyprotein (438 aa).

3 stretches are compositionally biased toward polar residues: residues 1-11 (MESQQLHQNPH), 19-39 (ASVT…SASN), and 49-60 (KVNSQQETTPGT). 3 disordered regions span residues 1 to 86 (MESQ…GQYQ), 366 to 397 (VSRT…AKAH), and 419 to 438 (SSQY…TERI). The RNA-binding stretch occupies residues 295–397 (ENNINVSDRL…SSKPRAAKAH (103 aa)). Low complexity predominate over residues 369–381 (TSPNTTNTKVTTR).

In terms of assembly, homotrimer.

It is found in the cytoplasm. Capsid protein (CA) is the structural component of the virus-like particle (VLP), forming the shell that encapsulates the retrotransposons dimeric RNA genome. The particles are assembled from trimer-clustered units and there are holes in the capsid shells that allow for the diffusion of macromolecules. CA also has nucleocapsid-like chaperone activity, promoting primer tRNA(i)-Met annealing to the multipartite primer-binding site (PBS), dimerization of Ty2 RNA and initiation of reverse transcription. This Saccharomyces cerevisiae (strain ATCC 204508 / S288c) (Baker's yeast) protein is Transposon Ty2-F Gag polyprotein (TY2A-F).